Consider the following 611-residue polypeptide: Leukotriene A-4 hydrolase (611 aa).

Residue Lys73 is modified to N6-acetyllysine. A peptide contacts are provided by residues 135–137 (QCQ) and 267–272 (PYGGME). Zn(2+) is bound at residue His296. Residue Glu297 is the Proton acceptor of the active site. Residues His300 and Glu319 each coordinate Zn(2+). Lys337 is modified (N6-acetyllysine). The Proton donor role is filled by Tyr384. Residue Lys414 is modified to N6-acetyllysine. Residue Ser416 is modified to Phosphoserine. A peptide is bound at residue 564–566 (RMK). The residue at position 573 (Lys573) is an N6-acetyllysine.

This sequence belongs to the peptidase M1 family. Monomer. Requires Zn(2+) as cofactor. In terms of processing, phosphorylation at Ser-416 inhibits leukotriene-A4 hydrolase activity. Isoform 1 and isoform 2 are expressed in monocytes, lymphocytes, neutrophils, reticulocytes, platelets and fibroblasts.

Its subcellular location is the cytoplasm. It carries out the reaction leukotriene A4 + H2O = leukotriene B4. The enzyme catalyses (5S,6S)-epoxy-(18R)-hydroxy-(7E,9E,11Z,14Z,16E)-eicosapentaenoate + H2O = resolvin E1. The catalysed reaction is (5S,6S)-epoxy-(18S)-hydroxy-(7E,9E,11Z,14Z,16E)-eicosapentaenoate + H2O = 18S-resolvin E1. It catalyses the reaction Release of the N-terminal residue from a tripeptide.. It functions in the pathway lipid metabolism; leukotriene B4 biosynthesis. With respect to regulation, inhibited by bestatin. The epoxide hydrolase activity is restrained by suicide inactivation that involves binding of LTA4 to Tyr-379. 4-(4-benzylphenyl)thiazol-2-amine (ARM1) selectively inhibits the epoxide hydrolase activity. Its function is as follows. Bifunctional zinc metalloenzyme that comprises both epoxide hydrolase (EH) and aminopeptidase activities. Acts as an epoxide hydrolase to catalyze the conversion of LTA4 to the pro-inflammatory mediator leukotriene B4 (LTB4). Also has aminopeptidase activity, with high affinity for N-terminal arginines of various synthetic tripeptides. In addition to its pro-inflammatory EH activity, may also counteract inflammation by its aminopeptidase activity, which inactivates by cleavage another neutrophil attractant, the tripeptide Pro-Gly-Pro (PGP), a bioactive fragment of collagen generated by the action of matrix metalloproteinase-9 (MMP9) and prolylendopeptidase (PREPL). Involved also in the biosynthesis of resolvin E1 and 18S-resolvin E1 from eicosapentaenoic acid, two lipid mediators that show potent anti-inflammatory and pro-resolving actions. The sequence is that of Leukotriene A-4 hydrolase (LTA4H) from Homo sapiens (Human).